The primary structure comprises 252 residues: N-acetylglucosaminyl-phosphatidylinositol de-N-acetylase (252 aa).

The helical transmembrane segment at 2–22 (EVVGLLCVAVAVLTWGFLRVW) threads the bilayer. Residues 23–252 (NSAERMRSPE…YMSVNSLQLL (230 aa)) lie on the Cytoplasmic side of the membrane.

This sequence belongs to the PIGL family.

Its subcellular location is the endoplasmic reticulum membrane. It carries out the reaction a 6-(N-acetyl-alpha-D-glucosaminyl)-1-(1,2-diacyl-sn-glycero-3-phospho)-1D-myo-inositol + H2O = a 6-(alpha-D-glucosaminyl)-1-(1,2-diacyl-sn-glycero-3-phospho)-1D-myo-inositol + acetate. The protein operates within glycolipid biosynthesis; glycosylphosphatidylinositol-anchor biosynthesis. In terms of biological role, catalyzes the second step of glycosylphosphatidylinositol (GPI) biosynthesis, which is the de-N-acetylation of N-acetylglucosaminyl-phosphatidylinositol. This Rattus norvegicus (Rat) protein is N-acetylglucosaminyl-phosphatidylinositol de-N-acetylase (Pigl).